The sequence spans 975 residues: Translation initiation factor IF-2 (975 aa).

The segment covering 48-63 (DHLRKSHGATDGDKRK) has biased composition (basic and acidic residues). Disordered stretches follow at residues 48-84 (DHLR…GKAR) and 96-388 (FVKR…QAPT). Residues 104–115 (ETGADQAQAQTD) show a composition bias toward low complexity. Residues 120–177 (AELKRREEEARREAELLEKQAQELRERQERLEREEAERRAREEAAEAERRRAEEEAAA) show a composition bias toward basic and acidic residues. Positions 178 to 211 (KRAAAAQAEAAQQAAAAREQAQRAQSEPAEQSAQ) are enriched in low complexity. Residues 212-263 (DEARAAAERAAQREAAKKAEDAAREAADKARAEQEEIRKRREAAEAEARAIR) are compositionally biased toward basic and acidic residues. Positions 302–330 (KPAGEAAAARPAAKKPASGAPAPAAAPAG) are enriched in low complexity. Positions 359 to 372 (SSGGVDRGWRGGPK) are enriched in gly residues. In terms of domain architecture, tr-type G spans 475–644 (PRPPVVTVMG…LLQAEVLELK (170 aa)). The segment at 484–491 (GHVDHGKT) is G1. 484-491 (GHVDHGKT) contributes to the GTP binding site. A G2 region spans residues 509-513 (GITQH). The G3 stretch occupies residues 530–533 (DTPG). Residues 530-534 (DTPGH) and 584-587 (NKID) contribute to the GTP site. The tract at residues 584-587 (NKID) is G4. Positions 620-622 (SAK) are G5.

This sequence belongs to the TRAFAC class translation factor GTPase superfamily. Classic translation factor GTPase family. IF-2 subfamily.

The protein resides in the cytoplasm. In terms of biological role, one of the essential components for the initiation of protein synthesis. Protects formylmethionyl-tRNA from spontaneous hydrolysis and promotes its binding to the 30S ribosomal subunits. Also involved in the hydrolysis of GTP during the formation of the 70S ribosomal complex. This is Translation initiation factor IF-2 from Burkholderia pseudomallei (strain 1710b).